Consider the following 156-residue polypeptide: SCP2 sterol-binding domain-containing protein 1 (156 aa).

Positions 44 to 156 (NFSVFEDISQ…ERIFREWAKI (113 aa)) constitute an SCP2 domain.

This Mus musculus (Mouse) protein is SCP2 sterol-binding domain-containing protein 1 (Scp2d1).